A 178-amino-acid chain; its full sequence is MAAPLGGMFSGQPPGPPQAPPGLPGQASLLQAAPGAPRPSSSTLVDELESSFEACFASLVSQDYVNGTDQEEIRTGVDQCIQKFLDIARQTECFFLQKRLQLSVQKPEQVIKEDVSELRNELQRKDALVQKHLTKLRHWQQVLEDINVQHKKPADIPQGSLAYLEQASANIPAPLKPT.

Positions 1-44 (MAAPLGGMFSGQPPGPPQAPPGLPGQASLLQAAPGAPRPSSSTL) are disordered. Residues 13-23 (PPGPPQAPPGL) show a composition bias toward pro residues. Residues 109–145 (QVIKEDVSELRNELQRKDALVQKHLTKLRHWQQVLED) adopt a coiled-coil conformation.

It belongs to the Mediator complex subunit 28 family. Component of the Mediator complex, which is composed of MED1, MED4, MED6, MED7, MED8, MED9, MED10, MED11, MED12, MED13, MED13L, MED14, MED15, MED16, MED17, MED18, MED19, MED20, MED21, MED22, MED23, MED24, MED25, MED26, MED27, MED29, MED30, MED31, CCNC, CDK8 and CDC2L6/CDK11. The MED12, MED13, CCNC and CDK8 subunits form a distinct module termed the CDK8 module. Mediator containing the CDK8 module is less active than Mediator lacking this module in supporting transcriptional activation. Individual preparations of the Mediator complex lacking one or more distinct subunits have been variously termed ARC, CRSP, DRIP, PC2, SMCC and TRAP. Forms a ternary complex with NF2/merlin and GRB2. Binds to actin. Widely expressed. Highly expressed in vascular tissues such as placenta, testis and liver.

The protein localises to the nucleus. It is found in the cytoplasm. Its subcellular location is the membrane. Its function is as follows. Component of the Mediator complex, a coactivator involved in the regulated transcription of nearly all RNA polymerase II-dependent genes. Mediator functions as a bridge to convey information from gene-specific regulatory proteins to the basal RNA polymerase II transcription machinery. Mediator is recruited to promoters by direct interactions with regulatory proteins and serves as a scaffold for the assembly of a functional preinitiation complex with RNA polymerase II and the general transcription factors. May be part of a complex containing NF2/merlin that participates in cellular signaling to the actin cytoskeleton downstream of tyrosine kinase signaling pathways. The sequence is that of Mediator of RNA polymerase II transcription subunit 28 (MED28) from Homo sapiens (Human).